The following is a 214-amino-acid chain: Putative archaetidylserine decarboxylase proenzyme (214 aa).

Serine 180 functions as the Schiff-base intermediate with substrate; via pyruvic acid in the catalytic mechanism. Position 180 is a pyruvic acid (Ser); by autocatalysis (serine 180).

It belongs to the phosphatidylserine decarboxylase family. PSD-A subfamily. Heterodimer of a large membrane-associated beta subunit and a small pyruvoyl-containing alpha subunit. The cofactor is pyruvate. In terms of processing, is synthesized initially as an inactive proenzyme. Formation of the active enzyme involves a self-maturation process in which the active site pyruvoyl group is generated from an internal serine residue via an autocatalytic post-translational modification. Two non-identical subunits are generated from the proenzyme in this reaction, and the pyruvate is formed at the N-terminus of the alpha chain, which is derived from the carboxyl end of the proenzyme. The post-translation cleavage follows an unusual pathway, termed non-hydrolytic serinolysis, in which the side chain hydroxyl group of the serine supplies its oxygen atom to form the C-terminus of the beta chain, while the remainder of the serine residue undergoes an oxidative deamination to produce ammonia and the pyruvoyl prosthetic group on the alpha chain.

The protein localises to the cell membrane. It carries out the reaction archaetidylserine + H(+) = archaetidylethanolamine + CO2. Functionally, catalyzes the formation of archaetidylethanolamine (PtdEtn) from archaetidylserine (PtdSer). The polypeptide is Putative archaetidylserine decarboxylase proenzyme (Methanopyrus kandleri (strain AV19 / DSM 6324 / JCM 9639 / NBRC 100938)).